Consider the following 196-residue polypeptide: Somatotropin (196 aa).

Residues 1–16 form the signal peptide; it reads MDKVILVLLMSLGASS. Gln17 bears the Pyrrolidone carboxylic acid mark. His35 serves as a coordination point for Zn(2+). Cys67 and Cys169 are oxidised to a cystine. Zn(2+) is bound at residue Glu178. Residues Cys186 and Cys194 are joined by a disulfide bond.

The protein belongs to the somatotropin/prolactin family.

It localises to the secreted. Growth hormone plays an important role in growth control and is involved in the regulation of several anabolic processes. Implicated as an osmoregulatory substance important for seawater adaptation. This chain is Somatotropin (gh), found in Takifugu rubripes (Japanese pufferfish).